The primary structure comprises 311 residues: Ribosomal RNA small subunit methyltransferase H (311 aa).

S-adenosyl-L-methionine contacts are provided by residues 32-34 (AGH), D52, F79, D100, and Q107. Positions 289–298 (SKEELEENNR) are enriched in basic and acidic residues. Residues 289–311 (SKEELEENNRARSAKLRIAEKRK) form a disordered region. The segment covering 300 to 311 (RSAKLRIAEKRK) has biased composition (basic residues).

This sequence belongs to the methyltransferase superfamily. RsmH family.

Its subcellular location is the cytoplasm. It carries out the reaction cytidine(1402) in 16S rRNA + S-adenosyl-L-methionine = N(4)-methylcytidine(1402) in 16S rRNA + S-adenosyl-L-homocysteine + H(+). Its function is as follows. Specifically methylates the N4 position of cytidine in position 1402 (C1402) of 16S rRNA. This is Ribosomal RNA small subunit methyltransferase H from Bacillus velezensis (strain DSM 23117 / BGSC 10A6 / LMG 26770 / FZB42) (Bacillus amyloliquefaciens subsp. plantarum).